Consider the following 327-residue polypeptide: Small ribosomal subunit protein uS2 (327 aa).

A disordered region spans residues 258 to 327 (AGHTPVSETL…PGVADGAALE (70 aa)).

The protein belongs to the universal ribosomal protein uS2 family.

The protein is Small ribosomal subunit protein uS2 of Anaplasma marginale (strain St. Maries).